Reading from the N-terminus, the 96-residue chain is Basic blue protein (96 aa).

In terms of domain architecture, Phytocyanin spans 1 to 96 (AVYVVGGSGG…SGMKIAVNAL (96 aa)). Residues histidine 39, cysteine 79, histidine 84, and methionine 89 each coordinate Cu cation. Cysteine 52 and cysteine 85 form a disulfide bridge.

This Cucumis sativus (Cucumber) protein is Basic blue protein.